The primary structure comprises 231 residues: 2-C-methyl-D-erythritol 4-phosphate cytidylyltransferase (231 aa).

The protein belongs to the IspD/TarI cytidylyltransferase family. IspD subfamily.

The catalysed reaction is 2-C-methyl-D-erythritol 4-phosphate + CTP + H(+) = 4-CDP-2-C-methyl-D-erythritol + diphosphate. The protein operates within isoprenoid biosynthesis; isopentenyl diphosphate biosynthesis via DXP pathway; isopentenyl diphosphate from 1-deoxy-D-xylulose 5-phosphate: step 2/6. Its function is as follows. Catalyzes the formation of 4-diphosphocytidyl-2-C-methyl-D-erythritol from CTP and 2-C-methyl-D-erythritol 4-phosphate (MEP). The polypeptide is 2-C-methyl-D-erythritol 4-phosphate cytidylyltransferase (Pseudoalteromonas atlantica (strain T6c / ATCC BAA-1087)).